Here is a 239-residue protein sequence, read N- to C-terminus: Serine protease SplC (239 aa).

A signal peptide spans 1–36 (MNKNIVIKSMAALAILTSATGINAAVVEETQQIANA). Residues His-75, Asp-113, and Ser-193 each act as charge relay system in the active site.

This sequence belongs to the peptidase S1B family.

The protein resides in the secreted. This is Serine protease SplC (splC) from Staphylococcus aureus (strain MSSA476).